Reading from the N-terminus, the 411-residue chain is Citrate synthase (411 aa).

Catalysis depends on residues His304 and Asp363.

It belongs to the citrate synthase family.

The catalysed reaction is oxaloacetate + acetyl-CoA + H2O = citrate + CoA + H(+). The protein operates within carbohydrate metabolism; tricarboxylic acid cycle; isocitrate from oxaloacetate: step 1/2. The protein is Citrate synthase (gltA) of Rickettsia helvetica.